A 504-amino-acid polypeptide reads, in one-letter code: Galactokinase (504 aa).

Alpha-D-galactose is bound by residues Arg-47, Asp-53, His-54, and Asp-56. ATP is bound by residues Gly-150, Gly-152, Ser-154, and Ser-155. Positions 196 and 200 each coordinate alpha-D-galactose. Residue Asp-200 is the Proton acceptor of the active site. Residues Ser-244, Asn-245, and Lys-246 each contribute to the ATP site. Residue Tyr-254 coordinates alpha-D-galactose.

It belongs to the GHMP kinase family. GalK subfamily.

The catalysed reaction is alpha-D-galactose + ATP = alpha-D-galactose 1-phosphate + ADP + H(+). The protein operates within carbohydrate metabolism; galactose metabolism. In terms of biological role, galactokinase is a key enzyme in the galactose metabolism where it catalyzes the conversion of alpha-D-galactose to galactose 1-phosphate. Can also induce the transcription of the gal genes in response to the organism being challenged with galactose as the sole source of carbon. The sequence is that of Galactokinase from Candida parapsilosis (Yeast).